Here is a 295-residue protein sequence, read N- to C-terminus: Iron-sulfur cluster carrier protein (295 aa).

38–45 is an ATP binding site; that stretch reads GKGGVGKS.

The protein belongs to the Mrp/NBP35 ATP-binding proteins family. In terms of assembly, homodimer.

In terms of biological role, binds and transfers iron-sulfur (Fe-S) clusters to target apoproteins. Can hydrolyze ATP. The sequence is that of Iron-sulfur cluster carrier protein from Pyrococcus horikoshii (strain ATCC 700860 / DSM 12428 / JCM 9974 / NBRC 100139 / OT-3).